The following is a 70-amino-acid chain: Movement protein TGBp3 (70 aa).

Over 1-4 (MEVN) the chain is Lumenal. A helical membrane pass occupies residues 5–27 (TYLNAIILVLVVTIIAVISTSLV). The Cytoplasmic portion of the chain corresponds to 28 to 70 (RTEPCVIKITGESITVLACKLDAETIKAIADLKPLSVERLSFH).

This sequence belongs to the Tymovirales TGBp3 protein family.

It localises to the host endoplasmic reticulum membrane. Functionally, plays a role in viral cell-to-cell propagation, by facilitating genome transport to neighboring plant cells through plasmosdesmata. May induce the formation of granular vesicles derived from the endoplasmic reticulum, which align on actin filaments. This Brassica campestris (Field mustard) protein is Movement protein TGBp3.